We begin with the raw amino-acid sequence, 869 residues long: Serendipity locus protein H-1 (869 aa).

Residues 1-17 are compositionally biased toward basic and acidic residues; that stretch reads MEGGKGEGKRMKEEAPS. Disordered regions lie at residues 1–32 and 134–165; these read MEGG…AGTP and FSVT…TPVK. Residues 146–164 are compositionally biased toward polar residues; it reads AFTNSPFKKTSSSGTSTPV. 8 consecutive C2H2-type zinc fingers follow at residues 269–293, 299–321, 331–352, 358–380, 386–408, 414–436, 442–464, and 470–493; these read HKCL…AAAH, YRCS…LKTH, KKCP…RKIH, YQCD…ARIH, YECP…QKYH, YRCE…NLVH, FACT…SNIH, and FKCN…RRRH. 2 disordered regions span residues 554–573 and 617–652; these read TSTA…QPQQ and PKQT…SSLE. Residues 630–648 show a composition bias toward low complexity; sequence APKQLQQKPQLLQQGQPQQ.

In terms of tissue distribution, distribution varies between nurse cells and the oocyte during oogenesis. Weakly expressed in follicle and border cells.

It localises to the nucleus. In terms of biological role, may belong to a complex set of multifingered proteins which play an important role in gene activation or regulation at early embryonic stages through a maximal accumulation of their transcripts (or protein product) in the mature oocyte. The sequence is that of Serendipity locus protein H-1 (wdn) from Drosophila melanogaster (Fruit fly).